Consider the following 433-residue polypeptide: MRAEGLGGLERFCSPGKGRGLRALQPFQVGDLLFSCPAYAYVLTVNERGNHCEYCFTRKEGLSKCGRCKQAFYCNVECQKEDWPMHKLECSPMVVFGENWNPSETVRLTARILAKQKIHPERTPSEKLLAVKEFESHLDKLDNEKKDLIQSDIAALHHFYSKHLGFPDNDSLVVLFAQVNCNGFTIEDEELSHLGSAIFPDVALMNHSCCPNVIVTYKGTLAEVRAVQEIKPGEEVFTSYIDLLYPTEDRNDRLRDSYFFTCECQECTTKDKDKAKVEIRKLSDPPKAEAIRDMVRYARNVIEEFRRAKHYKSPSELLEICELSQEKMSSVFEDSNVYMLHMMYQAMGVCLYMQDWEGALQYGQKIIKPYSKHYPLYSLNVASMWLKLGRLYMGLEHKAAGEKALKKAIAIMEVAHGKDHPYISEIKQEIESH.

The SET domain occupies 7–241 (GGLERFCSPG…PGEEVFTSYI (235 aa)). An S-adenosyl-L-methionine-binding site is contributed by 17-19 (KGR). The Zn(2+) site is built by Cys-52, Cys-55, Cys-65, Cys-68, Cys-74, Cys-78, His-86, and Cys-90. The MYND-type zinc-finger motif lies at 52–90 (CEYCFTRKEGLSKCGRCKQAFYCNVECQKEDWPMHKLEC). Residues His-137, 206-207 (NH), and 258-260 (YFF) each bind S-adenosyl-L-methionine. At Ser-283 the chain carries Phosphoserine.

It belongs to the class V-like SAM-binding methyltransferase superfamily. As to quaternary structure, interacts with RNA polymerase II and HELZ. Interacts with SIN3A and HDAC1. Interacts (via MYND-type zinc finger) with EPB41L3. Interacts (via SET domain) with p53/TP53. Interacts with RB1 and HSP90AA1.

The protein localises to the cytoplasm. The protein resides in the cytosol. Its subcellular location is the nucleus. It catalyses the reaction L-lysyl(4)-[histone H3] + 3 S-adenosyl-L-methionine = N(6),N(6),N(6)-trimethyl-L-lysyl(4)-[histone H3] + 3 S-adenosyl-L-homocysteine + 3 H(+). The enzyme catalyses L-lysyl-[protein] + S-adenosyl-L-methionine = N(6)-methyl-L-lysyl-[protein] + S-adenosyl-L-homocysteine + H(+). Functionally, protein-lysine N-methyltransferase that methylates both histones and non-histone proteins, including p53/TP53 and RB1. Specifically trimethylates histone H3 'Lys-4' (H3K4me3) in vivo. The activity requires interaction with HSP90alpha. Shows even higher methyltransferase activity on p53/TP53. Monomethylates 'Lys-370' of p53/TP53, leading to decreased DNA-binding activity and subsequent transcriptional regulation activity of p53/TP53. Monomethylates RB1 at 'Lys-860'. The chain is N-lysine methyltransferase SMYD2 (SMYD2) from Homo sapiens (Human).